We begin with the raw amino-acid sequence, 308 residues long: Lysophosphatidic acid receptor 6 (308 aa).

The Extracellular segment spans residues 1-16 (MVSSNCSTEDSFKYTL). A glycan (N-linked (GlcNAc...) asparagine) is linked at N5. The chain crosses the membrane as a helical span at residues 17–43 (YGCVFSMVFVLGLIANCVAIYIFTFTL). The Cytoplasmic segment spans residues 44–52 (KVRNETTTY). Residues 53–76 (MLNLAISDLLFVFTLPFRIYYFVV) traverse the membrane as a helical segment. Residues 77–89 (RNWPFGDVLCKIS) are Extracellular-facing. C86 and C165 are oxidised to a cystine. Residues 90–109 (VTLFYTNMYGSILFLTCISV) form a helical membrane-spanning segment. The Cytoplasmic portion of the chain corresponds to 110-130 (DRFLAIVHPFRSKTLRTKRNA). A helical membrane pass occupies residues 131–151 (RIVCVAVWITVLAGSTPASFF). The Extracellular portion of the chain corresponds to 152–178 (QSTNRQNNTEQRTCFENFPESTWKTYL). Residues 179–206 (SRIVIFIEIVGFFIPLILNVTCSTMVLR) traverse the membrane as a helical segment. Over 207–224 (TLNKPLTLSRNKLSKKKV) the chain is Cytoplasmic. A helical membrane pass occupies residues 225–250 (LKMIFVHLVIFCFCFVPYNITLILYS). Residues 251–269 (LMRTQTWINCSVVTAVRTM) are Extracellular-facing. A helical membrane pass occupies residues 270 to 289 (YPVTLCIAVSNCCFDPIVYY). C281 carries the S-palmitoyl cysteine lipid modification. Over 290 to 308 (FTSDTNSELDKKQQVHQNT) the chain is Cytoplasmic.

This sequence belongs to the G-protein coupled receptor 1 family. Induced in activated T-cells.

It is found in the cell membrane. Its function is as follows. Binds to oleoyl-L-alpha-lysophosphatidic acid (LPA). Intracellular cAMP is involved in the receptor activation. In Gallus gallus (Chicken), this protein is Lysophosphatidic acid receptor 6 (LPAR6).